The following is a 262-amino-acid chain: Phosphatidylserine decarboxylase proenzyme (262 aa).

Active-site charge relay system; for autoendoproteolytic cleavage activity residues include Asp-86, His-142, and Ser-226. Catalysis depends on Ser-226, which acts as the Schiff-base intermediate with substrate; via pyruvic acid; for decarboxylase activity. Ser-226 bears the Pyruvic acid (Ser); by autocatalysis mark.

This sequence belongs to the phosphatidylserine decarboxylase family. PSD-B subfamily. Prokaryotic type I sub-subfamily. As to quaternary structure, heterodimer of a large membrane-associated beta subunit and a small pyruvoyl-containing alpha subunit. Pyruvate is required as a cofactor. In terms of processing, is synthesized initially as an inactive proenzyme. Formation of the active enzyme involves a self-maturation process in which the active site pyruvoyl group is generated from an internal serine residue via an autocatalytic post-translational modification. Two non-identical subunits are generated from the proenzyme in this reaction, and the pyruvate is formed at the N-terminus of the alpha chain, which is derived from the carboxyl end of the proenzyme. The autoendoproteolytic cleavage occurs by a canonical serine protease mechanism, in which the side chain hydroxyl group of the serine supplies its oxygen atom to form the C-terminus of the beta chain, while the remainder of the serine residue undergoes an oxidative deamination to produce ammonia and the pyruvoyl prosthetic group on the alpha chain. During this reaction, the Ser that is part of the protease active site of the proenzyme becomes the pyruvoyl prosthetic group, which constitutes an essential element of the active site of the mature decarboxylase.

It localises to the cell membrane. It catalyses the reaction a 1,2-diacyl-sn-glycero-3-phospho-L-serine + H(+) = a 1,2-diacyl-sn-glycero-3-phosphoethanolamine + CO2. It functions in the pathway phospholipid metabolism; phosphatidylethanolamine biosynthesis; phosphatidylethanolamine from CDP-diacylglycerol: step 2/2. Catalyzes the formation of phosphatidylethanolamine (PtdEtn) from phosphatidylserine (PtdSer). The polypeptide is Phosphatidylserine decarboxylase proenzyme (Bacillus anthracis).